We begin with the raw amino-acid sequence, 206 residues long: MSKGSTTKKWIQDHTSDYYVLQANKLGYRSRASFKIIEIQDKYNLFKQNMFIIDLGAAPGGWSEQVVKFIGNNGKLIALDLLEMAPIAGVEFIQGNFSSDETYERLNQLINDKKIDCVISDMAPNLSGNKTSDQARSIHLLELALDFATTNLNRNGSFVAKVFQGQGSDEYLKLVRESFNKVTQFKPKSSRPKSREFYVVATGFKG.

S-adenosyl-L-methionine-binding residues include glycine 60, tryptophan 62, aspartate 80, asparagine 96, and aspartate 121. Lysine 161 serves as the catalytic Proton acceptor.

The protein belongs to the class I-like SAM-binding methyltransferase superfamily. RNA methyltransferase RlmE family.

The protein resides in the cytoplasm. The enzyme catalyses uridine(2552) in 23S rRNA + S-adenosyl-L-methionine = 2'-O-methyluridine(2552) in 23S rRNA + S-adenosyl-L-homocysteine + H(+). In terms of biological role, specifically methylates the uridine in position 2552 of 23S rRNA at the 2'-O position of the ribose in the fully assembled 50S ribosomal subunit. This chain is Ribosomal RNA large subunit methyltransferase E, found in Francisella philomiragia subsp. philomiragia (strain ATCC 25017 / CCUG 19701 / FSC 153 / O#319-036).